Reading from the N-terminus, the 205-residue chain is Thymidine kinase (205 aa).

ATP-binding positions include 9 to 16 and 87 to 90; these read SAMNAGKS and DESQ. Catalysis depends on Glu-88, which acts as the Proton acceptor. The Zn(2+) site is built by Cys-145, Cys-147, Cys-182, and His-185.

It belongs to the thymidine kinase family. In terms of assembly, homotetramer.

It is found in the cytoplasm. It catalyses the reaction thymidine + ATP = dTMP + ADP + H(+). This chain is Thymidine kinase, found in Salmonella paratyphi A (strain ATCC 9150 / SARB42).